The sequence spans 267 residues: UDP-glucose:undecaprenyl-phosphate glucose-1-phosphate transferase (267 aa).

A helical transmembrane segment spans residues 83–103 (VAAALLTALFAPLLLLAALAI).

This sequence belongs to the bacterial sugar transferase family.

It is found in the cell membrane. It catalyses the reaction di-trans,octa-cis-undecaprenyl phosphate + UDP-alpha-D-glucose = alpha-D-glucosyl di-trans,octa-cis-undecaprenyl diphosphate + UMP. In terms of biological role, is likely the initiating enzyme for holdfast polysaccharide synthesis. Catalyzes the transfer of the glucose-1-phosphate moiety from UDP-Glc onto the carrier lipid undecaprenyl phosphate (C55-P), forming a phosphoanhydride bond yielding to glucosyl-pyrophosphoryl-undecaprenol (Glc-PP-C55). Also possesses a weak galactose-1-P transferase activity. This Caulobacter vibrioides (strain ATCC 19089 / CIP 103742 / CB 15) (Caulobacter crescentus) protein is UDP-glucose:undecaprenyl-phosphate glucose-1-phosphate transferase (pssY).